We begin with the raw amino-acid sequence, 299 residues long: Ankyrin repeat domain-containing protein 54 (299 aa).

Positions 1–27 (MAATGGGAEDESRSGRSSSEGECAVAP) are disordered. The residue at position 2 (A2) is an N-acetylalanine. Position 62 is a phosphoserine (S62). A Nuclear localization signal (NLS) motif is present at residues 98–116 (RRLGPTGKEVHALKRLRDS). 4 ANK repeats span residues 108–137 (HALKRLRDSANANDIETVQQLLEDGADPCA), 141–170 (KGRTALHFASCNGNDQIVQLLLDHGADPNQ), 174–203 (LGNTPLHLAACTNHVPVITTLLRGGARVDA), and 207–239 (AGRTPLHLAKSKLNILQEGHSQCLEAVRLEVKQ). The segment at 140–240 (DKGRTALHFA…EAVRLEVKQI (101 aa)) is LYN-binding. The short motif at 282–292 (LLASFTSLSLQ) is the Nuclear export signal (NES) element.

Interacts (via ankyrin repeat region) with LYN (via SH3-domain) in an activation-independent status of LYN. Forms a multiprotein complex with LYN and HCLS1. Interacts with TSN2, VAV1, DBNL and LASP1.

The protein localises to the nucleus. It is found in the cytoplasm. The protein resides in the midbody. Functionally, plays an important role in regulating intracellular signaling events associated with erythroid terminal differentiation. The protein is Ankyrin repeat domain-containing protein 54 (Ankrd54) of Rattus norvegicus (Rat).